We begin with the raw amino-acid sequence, 260 residues long: tRNA pseudouridine synthase C (260 aa).

D54 is a catalytic residue.

Belongs to the pseudouridine synthase RluA family.

It catalyses the reaction uridine(65) in tRNA = pseudouridine(65) in tRNA. Responsible for synthesis of pseudouridine from uracil-65 in transfer RNAs. This chain is tRNA pseudouridine synthase C (truC), found in Salmonella typhi.